A 69-amino-acid chain; its full sequence is DNA gyrase inhibitor YacG (69 aa).

C13, C16, C32, and C36 together coordinate Zn(2+).

It belongs to the DNA gyrase inhibitor YacG family. Interacts with GyrB. It depends on Zn(2+) as a cofactor.

Functionally, inhibits all the catalytic activities of DNA gyrase by preventing its interaction with DNA. Acts by binding directly to the C-terminal domain of GyrB, which probably disrupts DNA binding by the gyrase. The protein is DNA gyrase inhibitor YacG of Neisseria meningitidis serogroup B (strain ATCC BAA-335 / MC58).